The chain runs to 283 residues: ACT domain-containing protein DS12, chloroplastic (283 aa).

Residues 1–56 constitute a chloroplast transit peptide; it reads MAEMAVTAALRPCSGVSPAVSGTSHRRRRPAAWRALAPPPPHAGLRLSSPAVRVPR. Positions 14–78 are disordered; sequence SGVSPAVSGT…SNTDTVPTPK (65 aa). The span at 48-63 shows a compositional bias: low complexity; the sequence is SSPAVRVPRAASSAAV. ACT domains follow at residues 91–171 and 206–276; these read IVEI…ASSQ and LLVV…LRRP.

The protein resides in the plastid. Its subcellular location is the chloroplast. This chain is ACT domain-containing protein DS12, chloroplastic, found in Oryza sativa subsp. indica (Rice).